The sequence spans 343 residues: N-malonyltransferase FDB2 (343 aa).

Cys-107 acts as the Acyl-thioester intermediate in catalysis. His-155 acts as the Proton acceptor in catalysis. Asp-170 is an active-site residue.

It belongs to the arylamine N-acetyltransferase family.

The protein operates within xenobiotic degradation. Its function is as follows. N-malonyltransferase; part of the Fusarium detoxification of benzoxazolinone cluster involved in the degradation of benzoxazolinones produced by the host plant. Maize, wheat, and rye produce the 2 benzoxazinone phytoanticipins 2,4-dihy-droxy-7-methoxy-1,4-benzoxazin-3-one (DIMBOA) and 2,4-dihydroxy-1,4-benzoxazin-3-one (DIBOA) that, due to their inherent instability once released, spontaneously degrade to the more stable corresponding benzoxazolinones, 6-methoxy-2-benzoxazolinone (MBOA) and 2-benzoxazolinone (BOA), respectively. The first step in the detoxification of benzoxazolinones involves the hydrolysis of the cyclic ester bond of benzoxazolinones by the gamma-lactamase FDB1 to aminophenols. FDB1 is able to convert BOA into 2-aminophenol (2-AP), as well as MBOA into 5-methoxy-2-aminophenol (2-AMP). The N-malonyltransferase FDB2 then metabolizes aminophenols via N-malonylation to non-toxic malonamic acids. FDB2 converts 2-AP into N-(2-hydroxyphenyl) malonamic acid (HPMA) and 2-AMP into N-(2-hydroxy-4-methoxyphenyl) malonamic acid (HMPMA). The cluster also contains 2 transcription factors (FDB3 and FPSE_08121), an aldo-keto reductase (FPSE_08125) that possibly associates with a ketone component of BOA and MBOA degradation, an esterase (FPSE_08126), an acyl-CoA transferase (FPSE_08120), a solute carrier protein (FPSE_08119) and a transmembrane transporter (FPSE_08127) proposed to shuttle metabolites of benzoxazolinone degradation. The sequence is that of N-malonyltransferase FDB2 from Fusarium pseudograminearum (strain CS3096) (Wheat and barley crown-rot fungus).